The sequence spans 876 residues: Leucine--tRNA ligase (876 aa).

The 'HIGH' region signature appears at 43 to 53 (PYPSGRIHMGH). The short motif at 632 to 636 (KMSKS) is the 'KMSKS' region element. Position 635 (lysine 635) interacts with ATP.

The protein belongs to the class-I aminoacyl-tRNA synthetase family.

The protein resides in the cytoplasm. It catalyses the reaction tRNA(Leu) + L-leucine + ATP = L-leucyl-tRNA(Leu) + AMP + diphosphate. This chain is Leucine--tRNA ligase, found in Rhizobium etli (strain ATCC 51251 / DSM 11541 / JCM 21823 / NBRC 15573 / CFN 42).